Reading from the N-terminus, the 102-residue chain is Small ribosomal subunit protein uS10 (102 aa).

It belongs to the universal ribosomal protein uS10 family. Part of the 30S ribosomal subunit.

In terms of biological role, involved in the binding of tRNA to the ribosomes. This chain is Small ribosomal subunit protein uS10, found in Mesoplasma florum (strain ATCC 33453 / NBRC 100688 / NCTC 11704 / L1) (Acholeplasma florum).